A 280-amino-acid polypeptide reads, in one-letter code: Energy-coupling factor transporter ATP-binding protein EcfA1 (280 aa).

One can recognise an ABC transporter domain in the interval 6-241 (LRTENISFQY…SHMLQEIGLD (236 aa)). Residue 40–47 (GQNGSGKS) coordinates ATP.

Belongs to the ABC transporter superfamily. Energy-coupling factor EcfA family. In terms of assembly, forms a stable energy-coupling factor (ECF) transporter complex composed of 2 membrane-embedded substrate-binding proteins (S component), 2 ATP-binding proteins (A component) and 2 transmembrane proteins (T component).

The protein resides in the cell membrane. In terms of biological role, ATP-binding (A) component of a common energy-coupling factor (ECF) ABC-transporter complex. Unlike classic ABC transporters this ECF transporter provides the energy necessary to transport a number of different substrates. In Bacillus cereus (strain ATCC 10987 / NRS 248), this protein is Energy-coupling factor transporter ATP-binding protein EcfA1.